We begin with the raw amino-acid sequence, 539 residues long: Propionyl-CoA carboxylase beta chain, mitochondrial (539 aa).

A mitochondrion-targeting transit peptide spans 1–28 (MAAALRVAAVGARLSVLASGLRAAVRSL). Positions 32-290 (ATSVNERIEN…SSQDPAPVRE (259 aa)) constitute a CoA carboxyltransferase N-terminal domain. The interval 32–533 (ATSVNERIEN…SKKVQRPWRK (502 aa)) is carboxyltransferase. At Ser-71 the chain carries Phosphoserine. Lys-99 carries the N6-acetyllysine; alternate modification. At Lys-99 the chain carries N6-succinyllysine; alternate. N6-succinyllysine is present on Lys-248. Residues 294–533 (PSDRLVPELD…SKKVQRPWRK (240 aa)) enclose the CoA carboxyltransferase C-terminal domain. The segment at 325 to 358 (DEREFFEIMPNYAKNIIVGFARMNGRTVGIVGNQ) is acyl-CoA binding. Lys-474 and Lys-489 each carry N6-acetyllysine; alternate. N6-succinyllysine; alternate is present on residues Lys-474 and Lys-489.

This sequence belongs to the AccD/PCCB family. As to quaternary structure, the holoenzyme is a dodecamer composed of 6 PCCA/alpha subunits and 6 PCCB/beta subunits.

It is found in the mitochondrion matrix. The enzyme catalyses propanoyl-CoA + hydrogencarbonate + ATP = (S)-methylmalonyl-CoA + ADP + phosphate + H(+). It catalyses the reaction butanoyl-CoA + hydrogencarbonate + ATP = (2S)-ethylmalonyl-CoA + ADP + phosphate + H(+). Its pathway is metabolic intermediate metabolism; propanoyl-CoA degradation; succinyl-CoA from propanoyl-CoA: step 1/3. This is one of the 2 subunits of the biotin-dependent propionyl-CoA carboxylase (PCC), a mitochondrial enzyme involved in the catabolism of odd chain fatty acids, branched-chain amino acids isoleucine, threonine, methionine, and valine and other metabolites. Propionyl-CoA carboxylase catalyzes the carboxylation of propionyl-CoA/propanoyl-CoA to D-methylmalonyl-CoA/(S)-methylmalonyl-CoA. Within the holoenzyme, the alpha subunit catalyzes the ATP-dependent carboxylation of the biotin carried by the biotin carboxyl carrier (BCC) domain, while the beta subunit then transfers the carboxyl group from carboxylated biotin to propionyl-CoA. Propionyl-CoA carboxylase also significantly acts on butyryl-CoA/butanoyl-CoA, which is converted to ethylmalonyl-CoA/(2S)-ethylmalonyl-CoA at a much lower rate. Other alternative minor substrates include (2E)-butenoyl-CoA/crotonoyl-CoA. The polypeptide is Propionyl-CoA carboxylase beta chain, mitochondrial (Homo sapiens (Human)).